A 515-amino-acid polypeptide reads, in one-letter code: Sterol 14-alpha demethylase cyp51A (515 aa).

The helical transmembrane segment at 7-29 (LTAYMAVAVLTAILLNVVYQLFF) threads the bilayer. N-linked (GlcNAc...) asparagine glycans are attached at residues Asn33 and Asn269. Heme is bound at residue Cys454. N-linked (GlcNAc...) asparagine glycosylation is present at Asn512.

This sequence belongs to the cytochrome P450 family. It depends on heme as a cofactor.

Its subcellular location is the endoplasmic reticulum membrane. It catalyses the reaction a 14alpha-methyl steroid + 3 reduced [NADPH--hemoprotein reductase] + 3 O2 = a Delta(14) steroid + formate + 3 oxidized [NADPH--hemoprotein reductase] + 4 H2O + 4 H(+). The enzyme catalyses a 14alpha-methyl steroid + reduced [NADPH--hemoprotein reductase] + O2 = a 14alpha-hydroxymethyl steroid + oxidized [NADPH--hemoprotein reductase] + H2O + H(+). It carries out the reaction a 14alpha-hydroxymethyl steroid + reduced [NADPH--hemoprotein reductase] + O2 = a 14alpha-formyl steroid + oxidized [NADPH--hemoprotein reductase] + 2 H2O + H(+). The catalysed reaction is a 14alpha-formyl steroid + reduced [NADPH--hemoprotein reductase] + O2 = a Delta(14) steroid + formate + oxidized [NADPH--hemoprotein reductase] + H2O + 2 H(+). It catalyses the reaction lanosterol + 3 reduced [NADPH--hemoprotein reductase] + 3 O2 = 4,4-dimethyl-5alpha-cholesta-8,14,24-trien-3beta-ol + formate + 3 oxidized [NADPH--hemoprotein reductase] + 4 H2O + 4 H(+). The enzyme catalyses lanosterol + reduced [NADPH--hemoprotein reductase] + O2 = 32-hydroxylanosterol + oxidized [NADPH--hemoprotein reductase] + H2O + H(+). It carries out the reaction 32-hydroxylanosterol + reduced [NADPH--hemoprotein reductase] + O2 = 32-oxolanosterol + oxidized [NADPH--hemoprotein reductase] + 2 H2O + H(+). The catalysed reaction is 32-oxolanosterol + reduced [NADPH--hemoprotein reductase] + O2 = 4,4-dimethyl-5alpha-cholesta-8,14,24-trien-3beta-ol + formate + oxidized [NADPH--hemoprotein reductase] + H2O + 2 H(+). It catalyses the reaction eburicol + 3 reduced [NADPH--hemoprotein reductase] + 3 O2 = 14-demethyleburicol + formate + 3 oxidized [NADPH--hemoprotein reductase] + 4 H2O + 4 H(+). The enzyme catalyses eburicol + reduced [NADPH--hemoprotein reductase] + O2 = 32-hydroxyeburicol + oxidized [NADPH--hemoprotein reductase] + H2O + H(+). It carries out the reaction 32-hydroxyeburicol + reduced [NADPH--hemoprotein reductase] + O2 = 32-oxoeburicol + oxidized [NADPH--hemoprotein reductase] + 2 H2O + H(+). The catalysed reaction is 32-oxoeburicol + reduced [NADPH--hemoprotein reductase] + O2 = 14-demethyleburicol + formate + oxidized [NADPH--hemoprotein reductase] + H2O + 2 H(+). It functions in the pathway steroid metabolism; ergosterol biosynthesis. The sterol 14-alpha demethylase activity is inhibited by azole compounds. Activity is inhibited by the novel and long-acting fungicidal azole, PC1244. Its function is as follows. Sterol 14alpha-demethylase, encoded by cyp51A and cyp51B, that plays a critical role in the third module of ergosterol biosynthesis pathway, being ergosterol the major sterol component in fungal membranes that participates in a variety of functions. The third module or late pathway involves the ergosterol synthesis itself through consecutive reactions that mainly occur in the endoplasmic reticulum (ER) membrane. In filamentous fungi, during the initial step of this module, lanosterol (lanosta-8,24-dien-3beta-ol) can be metabolized to eburicol. Sterol 14alpha-demethylase catalyzes the three-step oxidative removal of the 14alpha-methyl group (C-32) of both these sterols in the form of formate, and converts eburicol and lanosterol to 14-demethyleburicol (4,4,24-trimethylergosta-8,14,24(28)-trienol) and 4,4-dimethyl-5alpha-cholesta-8,14,24-trien-3beta-ol, respectively, which are further metabolized by other enzymes in the pathway to ergosterol. Can also use substrates not intrinsic to fungi, such as 24,25-dihydrolanosterol (DHL), producing 4,4'-dimethyl-8,14-cholestadien-3-beta-ol, but at lower rates than the endogenous substrates. As a target of azole drugs, plays a crucial role in azole susceptibility. In Aspergillus fumigatus (strain ATCC MYA-4609 / CBS 101355 / FGSC A1100 / Af293) (Neosartorya fumigata), this protein is Sterol 14-alpha demethylase cyp51A.